The sequence spans 252 residues: Imidazole glycerol phosphate synthase subunit HisF (252 aa).

Catalysis depends on residues Asp-11 and Asp-130.

This sequence belongs to the HisA/HisF family. Heterodimer of HisH and HisF.

Its subcellular location is the cytoplasm. The catalysed reaction is 5-[(5-phospho-1-deoxy-D-ribulos-1-ylimino)methylamino]-1-(5-phospho-beta-D-ribosyl)imidazole-4-carboxamide + L-glutamine = D-erythro-1-(imidazol-4-yl)glycerol 3-phosphate + 5-amino-1-(5-phospho-beta-D-ribosyl)imidazole-4-carboxamide + L-glutamate + H(+). It functions in the pathway amino-acid biosynthesis; L-histidine biosynthesis; L-histidine from 5-phospho-alpha-D-ribose 1-diphosphate: step 5/9. Functionally, IGPS catalyzes the conversion of PRFAR and glutamine to IGP, AICAR and glutamate. The HisF subunit catalyzes the cyclization activity that produces IGP and AICAR from PRFAR using the ammonia provided by the HisH subunit. The chain is Imidazole glycerol phosphate synthase subunit HisF from Halothermothrix orenii (strain H 168 / OCM 544 / DSM 9562).